A 576-amino-acid polypeptide reads, in one-letter code: Sulfite reductase [NADPH] hemoprotein beta-component (576 aa).

[4Fe-4S] cluster is bound by residues C435, C441, C480, and C484. C484 contacts siroheme.

This sequence belongs to the nitrite and sulfite reductase 4Fe-4S domain family. In terms of assembly, alpha(8)-beta(8). The alpha component is a flavoprotein, the beta component is a hemoprotein. It depends on siroheme as a cofactor. [4Fe-4S] cluster serves as cofactor.

The enzyme catalyses hydrogen sulfide + 3 NADP(+) + 3 H2O = sulfite + 3 NADPH + 4 H(+). It participates in sulfur metabolism; hydrogen sulfide biosynthesis; hydrogen sulfide from sulfite (NADPH route): step 1/1. Component of the sulfite reductase complex that catalyzes the 6-electron reduction of sulfite to sulfide. This is one of several activities required for the biosynthesis of L-cysteine from sulfate. The polypeptide is Sulfite reductase [NADPH] hemoprotein beta-component (Photorhabdus laumondii subsp. laumondii (strain DSM 15139 / CIP 105565 / TT01) (Photorhabdus luminescens subsp. laumondii)).